The sequence spans 288 residues: Hemin import ATP-binding protein HmuV (288 aa).

The ABC transporter domain occupies 31–269; that stretch reads LRARGLVVER…DLLTRVYQHP (239 aa). 68-75 serves as a coordination point for ATP; the sequence is GPNGAGKS.

Belongs to the ABC transporter superfamily. Heme (hemin) importer (TC 3.A.1.14.5) family. As to quaternary structure, the complex is composed of two ATP-binding proteins (HmuV), two transmembrane proteins (HmuU) and a solute-binding protein (HmuT).

It is found in the cell membrane. Functionally, part of the ABC transporter complex HmuTUV involved in hemin import. Responsible for energy coupling to the transport system. This is Hemin import ATP-binding protein HmuV from Nocardia farcinica (strain IFM 10152).